The sequence spans 490 residues: Cardiolipin synthase 1 (490 aa).

The next 2 helical transmembrane spans lie at 9–29 (ILTI…FVII) and 42–62 (WAWL…YLFL). 2 consecutive PLD phosphodiesterase domains span residues 225–252 (MNNR…GDDY) and 403–430 (QNGF…DFRS). Active-site residues include His230, Lys232, Asp237, His408, Lys410, and Asp415.

The protein belongs to the phospholipase D family. Cardiolipin synthase subfamily.

The protein localises to the cell membrane. The enzyme catalyses 2 a 1,2-diacyl-sn-glycero-3-phospho-(1'-sn-glycerol) = a cardiolipin + glycerol. In terms of biological role, catalyzes the reversible phosphatidyl group transfer from one phosphatidylglycerol molecule to another to form cardiolipin (CL) (diphosphatidylglycerol) and glycerol. The polypeptide is Cardiolipin synthase 1 (cls1) (Staphylococcus epidermidis (strain ATCC 12228 / FDA PCI 1200)).